A 77-amino-acid chain; its full sequence is U8-lycotoxin-Ls1r (77 aa).

The first 20 residues, 1–20 (MKLIIFTGLVLFAIVSLIEA), serve as a signal peptide directing secretion. Positions 21–26 (QAENEK) are excised as a propeptide.

It belongs to the neurotoxin 19 (CSTX) family. 08 (U8-Lctx) subfamily. Post-translationally, contains 4 disulfide bonds. Expressed by the venom gland.

It localises to the secreted. The polypeptide is U8-lycotoxin-Ls1r (Lycosa singoriensis (Wolf spider)).